A 361-amino-acid polypeptide reads, in one-letter code: Phospho-N-acetylmuramoyl-pentapeptide-transferase (361 aa).

Helical transmembrane passes span 28 to 48 (LAII…IKFL), 74 to 94 (TMGG…LADL), 99 to 119 (IWIT…DDYA), 133 to 153 (SKLL…EYLD), 168 to 188 (LSLD…VGSS), 203 to 223 (VPIA…GNLI), 236 to 256 (TGEL…FLWF), 263 to 283 (VFMG…ISVI), 288 to 308 (IVLA…ILQV), and 338 to 358 (KVVI…LSSL).

It belongs to the glycosyltransferase 4 family. MraY subfamily. Mg(2+) is required as a cofactor.

The protein resides in the cell inner membrane. The catalysed reaction is UDP-N-acetyl-alpha-D-muramoyl-L-alanyl-gamma-D-glutamyl-meso-2,6-diaminopimeloyl-D-alanyl-D-alanine + di-trans,octa-cis-undecaprenyl phosphate = di-trans,octa-cis-undecaprenyl diphospho-N-acetyl-alpha-D-muramoyl-L-alanyl-D-glutamyl-meso-2,6-diaminopimeloyl-D-alanyl-D-alanine + UMP. It participates in cell wall biogenesis; peptidoglycan biosynthesis. Its function is as follows. Catalyzes the initial step of the lipid cycle reactions in the biosynthesis of the cell wall peptidoglycan: transfers peptidoglycan precursor phospho-MurNAc-pentapeptide from UDP-MurNAc-pentapeptide onto the lipid carrier undecaprenyl phosphate, yielding undecaprenyl-pyrophosphoryl-MurNAc-pentapeptide, known as lipid I. This is Phospho-N-acetylmuramoyl-pentapeptide-transferase from Rickettsia felis (strain ATCC VR-1525 / URRWXCal2) (Rickettsia azadi).